A 1440-amino-acid chain; its full sequence is MGKTYSSPINPIPKAPKGLAIHHWLNFLQAAYRLQPGPSEFDFHQLRKFLKLAIKTPVWLNPINYSVLAGLIPKNYPGRVHEIVAILIQETPAREAPPSAPLAEDPQKPPPYPEQAQEASQCLPILHPHGAPAAHRPWQMKDLQAIKQEVSSSAPGSPQFMQTIRLAVQQFDPTAKDLHDLLQYLCSSLVASLHHQQLETLIAQAETQGITGYNPLAGPLRIQANNPNQQGLRKEYQNLWLSAFSALPGNTKDPTWAAILQGPEEPFGSFVERLNVALDNGLPEGTPKDPILRSLAYSNANKECQKLLQARGQTNSPLGEMLRACQTWTPRDKNKILMVQPKKTPPPNQPCFRCGQVGHWSRDCKQPRPPPGPCPVCQDPTHWKRDCPQLKTDTRDSEDLLLDLPCEAPNVRERKNLLRGGGLASPRTILPLIPLSQQKQPTLHIQVSFSNTPPVSVQALLDTGADITVLPACLCPPDSNLQDTTVLGAGGPSTNKFKILPCPVHIHLPFRRQPVTLTACLIDINNQWTILGRDALQQCQSSLYLADQPSKVLPVLAPKLIGLEHLPPPPEVSQFPLNPERLQALTDLVSRALEAKHIEPYQGPGNNPIFPVKKPNGKWRFIHDLRATNSVTRDLASPSPGPPDLTSLPQGLPHLRTIDLTDAFFQIPLPTIFQPYFAFTLPQPNNYGPGTRYSWRVLPQGFKNSPTLFEQQLSHILTPVRKTFPNSLIIQYMDDILLASPAPGELAALTDKVTNALTKEGLPLSPEKTQATPGPIHFLGQVISQDCITYETLPSINVKSTWSLAELQSMLGELQWVSKGTPVLRSSLHQLYLALRGHRDPRDTIKLTSIQVQALRTIQKALTLNCRSRLVNQLPILALIMLRPTGTTAVLFQTKQKWPLVWLHTPHPATSLRPWGQLLANAVIILDKYSLQHYGQVCKSFHHNISNQALTYYLHTSDQSSVAILLQHSHRFHNLGAQPSGPWRSLLQMPQIFQNIDVLRPPFTISPVVINHAPCLFSDGSASKAAFIIWDRQVIHQQVLSLPSTCSAQAGELFGLLAGLQKSQPWVALNIFLDSKFLIGHLRRMALGAFPGPSTQCELHTQLLPLLQGKTVYVHHVRSHTLLQDPISRLNEATDALMLAPLLPLDPTTLHQLTHCNPYALRNHGATASEAHAIVQACHTCKVINPQGRLPQGYIRRGHAPNDIWQGDVTHLQYKRYKYCLLVWVDTYSGAVSVSCRRKETGSDCVASLLVAISILGKPQNINTDNGAAYLSQEFQQFCNSLAIKHSTHIPYNPTSSGLVERTNGILKTLISKYLLDNHHLPLETAVSKSLWTINHLNVLPSCQKTRWQLHQAQPLPPVPEDTLPPHTSPKWYYYKIPGLTNSRWSGPVQSLKEAAGAALIPVGGSYLWIPWRLLKRGICPRPESSAAVDPKTRDHQLHG.

Residue G2 is the site of N-myristoyl glycine; by host attachment. Positions 95–116 (EAPPSAPLAEDPQKPPPYPEQA) are disordered. The PTAP/PSAP motif signature appears at 98–101 (PSAP). The short motif at 109–112 (PPPY) is the PPXY motif element. 2 consecutive CCHC-type zinc fingers follow at residues 349–366 (QPCF…DCKQ) and 372–389 (GPCP…DCPQ). The Peptidase A2 domain occupies 457–535 (VQALLDTGAD…NQWTILGRDA (79 aa)). Catalysis depends on D462, which acts as the For protease activity; shared with dimeric partner. Residues 593-783 (LEAKHIEPYQ…GPIHFLGQVI (191 aa)) enclose the Reverse transcriptase domain. The Mg(2+) site is built by D659, D734, D735, D1019, E1052, D1074, D1135, D1208, and D1265. Residues 1010-1143 (INHAPCLFSD…TDALMLAPLL (134 aa)) enclose the RNase H type-1 domain. Positions 1197–1366 (RGHAPNDIWQ…PPVPEDTLPP (170 aa)) constitute an Integrase catalytic domain. The segment at residues 1371–1420 (KWYYYKIPGLTNSRWSGPVQSLKEAAGAALIPVGGSYLWIPWRLLKRGIC) is a DNA-binding region (integrase-type).

Interacts with human TSG101. This interaction is essential for budding and release of viral particles. It depends on Mg(2+) as a cofactor. Post-translationally, specific enzymatic cleavages by the viral protease yield mature proteins. The polyprotein is cleaved during and after budding, this process is termed maturation. The protease is autoproteolytically processed at its N- and C-termini.

Its subcellular location is the virion. It catalyses the reaction Endonucleolytic cleavage to 5'-phosphomonoester.. It carries out the reaction DNA(n) + a 2'-deoxyribonucleoside 5'-triphosphate = DNA(n+1) + diphosphate. Matrix protein p19 targets Gag, Gag-Pro and Gag-Pro-Pol polyproteins to the plasma membrane via a multipartite membrane binding signal, that includes its myristoylated N-terminus. Also mediates nuclear localization of the preintegration complex. In terms of biological role, capsid protein p24 forms the conical core of the virus that encapsulates the genomic RNA-nucleocapsid complex. Functionally, nucleocapsid protein p15 is involved in the packaging and encapsidation of two copies of the genome. Its function is as follows. The aspartyl protease mediates proteolytic cleavages of Gag, Gag-Pro and Gag-Pro-Pol polyproteins during or shortly after the release of the virion from the plasma membrane. Cleavages take place as an ordered, step-wise cascade to yield mature proteins. This process is called maturation. Displays maximal activity during the budding process just prior to particle release from the cell. Hydrolyzes host EIF4GI in order to shut off the capped cellular mRNA translation. The resulting inhibition of cellular protein synthesis serves to ensure maximal viral gene expression and to evade host immune response. Reverse transcriptase (RT) is a multifunctional enzyme that converts the viral RNA genome into dsDNA in the cytoplasm, shortly after virus entry into the cell. This enzyme displays a DNA polymerase activity that can copy either DNA or RNA templates, and a ribonuclease H (RNase H) activity that cleaves the RNA strand of RNA-DNA heteroduplexes in a partially processive 3' to 5'-endonucleasic mode. Conversion of viral genomic RNA into dsDNA requires many steps. A tRNA-Pro binds to the primer-binding site (PBS) situated at the 5'-end of the viral RNA. RT uses the 3' end of the tRNA primer to perform a short round of RNA-dependent minus-strand DNA synthesis. The reading proceeds through the U5 region and ends after the repeated (R) region which is present at both ends of viral RNA. The portion of the RNA-DNA heteroduplex is digested by the RNase H, resulting in a ssDNA product attached to the tRNA primer. This ssDNA/tRNA hybridizes with the identical R region situated at the 3' end of viral RNA. This template exchange, known as minus-strand DNA strong stop transfer, can be either intra- or intermolecular. RT uses the 3' end of this newly synthesized short ssDNA to perform the RNA-dependent minus-strand DNA synthesis of the whole template. RNase H digests the RNA template except for a polypurine tract (PPT) situated at the 5' end of the genome. It is not clear if both polymerase and RNase H activities are simultaneous. RNase H probably can proceed both in a polymerase-dependent (RNA cut into small fragments by the same RT performing DNA synthesis) and a polymerase-independent mode (cleavage of remaining RNA fragments by free RTs). Secondly, RT performs DNA-directed plus-strand DNA synthesis using the PPT that has not been removed by RNase H as primer. PPT and tRNA primers are then removed by RNase H. The 3' and 5' ssDNA PBS regions hybridize to form a circular dsDNA intermediate. Strand displacement synthesis by RT to the PBS and PPT ends produces a blunt ended, linear dsDNA copy of the viral genome that includes long terminal repeats (LTRs) at both ends. In terms of biological role, integrase catalyzes viral DNA integration into the host chromosome, by performing a series of DNA cutting and joining reactions. This enzyme activity takes place after virion entry into a cell and reverse transcription of the RNA genome in dsDNA. The first step in the integration process is 3' processing. This step requires a complex comprising the viral genome, matrix protein, and integrase. This complex is called the pre-integration complex (PIC). The integrase protein removes 2 nucleotides from each 3' end of the viral DNA, leaving recessed dinucleotides OH's at the 3' ends. In the second step, the PIC access cell chromosomes during cell division. The third step, termed strand transfer, the integrase protein joins the previously processed 3' ends to the 5'-ends of strands of target cellular DNA at the site of integration. The 5'-ends are produced by integrase-catalyzed staggered cuts, 5 bp apart. A Y-shaped, gapped, recombination intermediate results, with the 5'-ends of the viral DNA strands and the 3' ends of target DNA strands remaining unjoined, flanking a gap of 5 bp. The last step is viral DNA integration into host chromosome. This involves host DNA repair synthesis in which the 5 bp gaps between the unjoined strands (see above) are filled in and then ligated. The sequence is that of Gag-Pro-Pol polyprotein (gag-pro-pol) from Human T-cell leukemia virus 3 (strain 2026ND) (HTLV-3).